Consider the following 133-residue polypeptide: MQLFVRAQELHTFEVTGQETVAQIKAHVASLEGIAPEDQVVLLAGAPLEDEATLGQCGVEALTTLEVAGRMLGGKVHGSLARAGKVRGQTPKVAKQEKKKKKTGRAKRRMQYNRRFVNVVPTFGKKKGPNANS.

In terms of domain architecture, Ubiquitin-like spans 1-74 (MQLFVRAQEL…LEVAGRMLGG (74 aa)). A disordered region spans residues 84–110 (GKVRGQTPKVAKQEKKKKKTGRAKRRM). The segment covering 97–110 (EKKKKKTGRAKRRM) has biased composition (basic residues). Residue lysine 125 is modified to N6-succinyllysine.

It in the N-terminal section; belongs to the ubiquitin family. This sequence in the C-terminal section; belongs to the eukaryotic ribosomal protein eS30 family. In terms of assembly, component of the 40S subunit of the ribosome. Post-translationally, FUBI is cleaved from ribosomal protein S30 by the deubiquitinase USP36 before the assembly of ribosomal protein S30 into pre-40S ribosomal particles. FUBI removal from ribosomal protein S30 is a crucial event for the final maturation of pre-40S particles.

It is found in the cytoplasm. Its subcellular location is the nucleus. May have pro-apoptotic activity. Its function is as follows. Component of the 40S subunit of the ribosome. Contributes to the assembly and function of 40S ribosomal subunits. This chain is Ubiquitin-like FUBI-ribosomal protein eS30 fusion protein, found in Homo sapiens (Human).